Consider the following 259-residue polypeptide: 5'-nucleotidase SurE 1 (259 aa).

A divalent metal cation is bound by residues Asp-16, Asp-17, Ser-48, and Asn-101.

Belongs to the SurE nucleotidase family. A divalent metal cation serves as cofactor.

It is found in the cytoplasm. The catalysed reaction is a ribonucleoside 5'-phosphate + H2O = a ribonucleoside + phosphate. Its function is as follows. Nucleotidase that shows phosphatase activity on nucleoside 5'-monophosphates. This is 5'-nucleotidase SurE 1 from Burkholderia lata (strain ATCC 17760 / DSM 23089 / LMG 22485 / NCIMB 9086 / R18194 / 383).